We begin with the raw amino-acid sequence, 1749 residues long: Kinesin-like protein KIF13A (1749 aa).

A Kinesin motor domain is found at 5–352 (KVKVAVRVRP…LRYADRAKRI (348 aa)). ATP is bound at residue 102–109 (GQTGSGKS). A coiled-coil region spans residues 359–431 (NEDPNAKVIR…QERQRQLESM (73 aa)). The FHA domain maps to 469–519 (HTRVGADTSQDIQLFGIGIQPEHCEIDIAADGDITLTPKENARSCVNGTLV). Positions 552 to 775 (LKDFERETSS…VPEAKRLYGK (224 aa)) form a coiled coil. 2 disordered regions span residues 633 to 652 (QQLS…LAYS) and 834 to 853 (IPER…SGSL). Residue serine 636 is modified to Phosphoserine. A coiled-coil region spans residues 1086 to 1126 (SDALIKRREYLDEQIKKVSNKKEKTEDDMEREARLVEQWVG). Serine 1274 bears the Phosphoserine mark. The segment covering 1370–1383 (LSTPNVHNVSSSRP) has biased composition (polar residues). Disordered regions lie at residues 1370 to 1402 (LSTP…QLDV) and 1417 to 1436 (TLPR…ENPH). Residues 1421 to 1430 (DSPRRSKEGC) show a composition bias toward basic and acidic residues. Residues serine 1441, serine 1477, serine 1481, serine 1524, serine 1600, and serine 1650 each carry the phosphoserine modification. Residues 1475–1499 (LLSQEDSEEEENELEALSRKLMLTQ) are a coiled coil. Disordered stretches follow at residues 1584 to 1665 (CAEP…GHQA) and 1698 to 1749 (DFDG…TATR). Positions 1719–1741 (ETDHKGIPERPPDADRLHPKIEN) are enriched in basic and acidic residues.

It belongs to the TRAFAC class myosin-kinesin ATPase superfamily. Kinesin family. Interacts with AP1G1 and AP1G2. Interacts with ZFYVE26. Interacts with AP2B1.

The protein resides in the golgi apparatus membrane. Its subcellular location is the cytoplasm. It is found in the cytoskeleton. It localises to the microtubule organizing center. The protein localises to the centrosome. The protein resides in the midbody. Its subcellular location is the endosome membrane. Functionally, plus end-directed microtubule-dependent motor protein involved in intracellular transport and regulating various processes such as mannose-6-phosphate receptor (M6PR) transport to the plasma membrane, endosomal sorting during melanosome biogenesis and cytokinesis. During melanosome maturation, required for delivering melanogenic enzymes from recycling endosomes to nascent melanosomes by creating peripheral recycling endosomal subdomains in melanocytes. Also required for the abscission step in cytokinesis: mediates translocation of ZFYVE26, and possibly TTC19, to the midbody during cytokinesis. Mediates the transport of M6PR-containing vesicles from trans-Golgi network to the plasma membrane via direct interaction with the AP-1 complex. In Mus musculus (Mouse), this protein is Kinesin-like protein KIF13A (Kif13a).